The following is a 710-amino-acid chain: F-box/WD repeat-containing protein 7 (710 aa).

Positions 1–158 are disordered; the sequence is MNQELLSVGS…CSSVSDLPAH (158 aa). At serine 26 the chain carries Phosphoserine. A compositionally biased stretch (basic and acidic residues) spans 46 to 55; it reads RHQEEEHTAR. Residues 69–84 show a composition bias toward polar residues; that stretch reads QNDTQQGQVEENNNRF. Residues 87-132 are compositionally biased toward acidic residues; it reads VDEDSSGNQEEQEEDEEHAGEQEEEEEEEEEEEEMDQESDDFDPSD. Residues 133 to 142 show a composition bias toward basic and acidic residues; it reads DSSREDEHTH. The segment covering 143–158 has biased composition (polar residues); the sequence is NSNVTNCSSVSDLPAH. Threonine 208 bears the Phosphothreonine mark. Position 230 is a phosphoserine; by SGK1 (serine 230). Residues 281 to 327 enclose the F-box domain; that stretch reads RDFISLLPKELALYVLSFLEPKDLLQAAQTCRYWRILAEDNLLWREK. 7 WD repeats span residues 381 to 421, 423 to 459, 462 to 501, 503 to 539, 542 to 581, 583 to 621, and 625 to 662; these read GHDD…RTLV, HTGG…CIHT, GHTS…HVLM, HVAA…CLHT, GHTN…HTLT, HQSL…QTLQ, and KHQS…FIRN.

In terms of assembly, homodimer; homodimerization plays a role in substrate binding and/or ubiquitination and degradation. Component of the SCF(FBXW7) complex consisting of CUL1, RBX1, SKP1 and FBXW7. Interacts (via F-box domain) with SKP1. Interacts (via F-box domain) with pseudophosphatase STYX; the interaction is direct and prevents FBXW7 interaction with SKP1. Interacts with cyclin-E (CCNE1 or CCNE2). Interacts with PSEN1. Forms a trimeric complex with NOTCH1 and SGK1. Interacts with NOTCH1 intracellular domain/NICD and NOTCH4 intracellular domain/NICD. Interacts with NOTCH2 intracellular domain (N2ICD). Interacts with MYC (when phosphorylated). Interacts with USP28, counteracting ubiquitination of MYC. Interacts (when phosphorylated at Thr-208) with PIN1, disrupting FBXW7 dimerization and promoting FBXW7 autoubiquitination and degradation. Interacts with UBE2QL1. Interacts with FAM83D; promotes FBXW7 degradation. Interacts with MYCN; FBXW7 competes with AURKA for binding to unphosphorylated MYCN but not for binding to phosphorylated MYCN. Interacts with JUN. Found in a complex with JUN and PRR7. Interacts with JUN and PRR7; the interaction inhibits ubiquitination-mediated JUN degradation, promoting its phosphorylation and transcriptional activity. Interacts with NFE2L1. Interacts with NR1D1. Interacts with RICTOR; mediates RICTOR ubiquitination and degradation. Interacts with USP38, counteracting ubiquitination of MYC. Post-translationally, phosphorylation at Thr-208 promotes interaction with PIN1, leading to disrupt FBXW7 dimerization and promoting FBXW7 autoubiquitination and degradation. Phosphorylated by ATM at Ser-26 in response to DNA damage, promoting recruitment to DNA damage sites and 'Lys-63'-linked ubiquitination of phosphorylated XRCC4. In terms of processing, ubiquitinated: autoubiquitinates following phosphorylation at Thr-208 and subsequent interaction with PIN1. Ubiquitination leads to its proteasomal degradation. As to expression, widely expressed with highest levels in brain, heart and testis.

It is found in the nucleus. The protein localises to the nucleoplasm. It localises to the chromosome. The protein operates within protein modification; protein ubiquitination. In terms of biological role, substrate recognition component of a SCF (SKP1-CUL1-F-box protein) E3 ubiquitin-protein ligase complex which mediates the ubiquitination and subsequent proteasomal degradation of target proteins. Recognizes and binds phosphorylated sites/phosphodegrons within target proteins and thereafter brings them to the SCF complex for ubiquitination. Mediates ubiquitination and subsequent degradation of CCNE1 and MYC. Identified substrates include cyclin-E (CCNE1 or CCNE2), DISC1, JUN, MYC, NOTCH1 released notch intracellular domain (NICD), NOTCH2, MCL1, MLST8, RICTOR and probably PSEN1. Acts as a negative regulator of JNK signaling by binding to phosphorylated JUN and promoting its ubiquitination and subsequent degradation. SCF(FBXW7) complex mediates the ubiquitination and subsequent degradation of NFE2L1. Involved in bone homeostasis and negative regulation of osteoclast differentiation. Regulates the amplitude of the cyclic expression of hepatic core clock genes and genes involved in lipid and glucose metabolism via ubiquitination and proteasomal degradation of their transcriptional repressor NR1D1; CDK1-dependent phosphorylation of NR1D1 is necessary for SCF(FBXW7)-mediated ubiquitination. Also able to promote 'Lys-63'-linked ubiquitination in response to DNA damage. The SCF(FBXW7) complex facilitates double-strand break repair following phosphorylation by ATM: phosphorylation promotes localization to sites of double-strand breaks and 'Lys-63'-linked ubiquitination of phosphorylated XRCC4, enhancing DNA non-homologous end joining. This chain is F-box/WD repeat-containing protein 7, found in Mus musculus (Mouse).